Consider the following 238-residue polypeptide: MIYAGILAGGIGSRMGNVPLPKQFLSLQGKPIIIHTVEKFLMYKDFDEIIIATPQKWINYMLDLLNNYQLDDKKIKVIQGGDDRNHSIMNIIESIEQHKKLNDEDIIVTHDAVRPFLTNRIIRENVEYASQYGAVDTVVNAVDTIISSNDAQFISGIPIRSEMYQGQTPQTFKIKELKDSYLSLTQSQKEILTDACKILVELGKPVKLVKGELFNIKITTPYDLKVANSIITGAVDND.

Residues 7–10 (LAGG) and 81–87 (GDDRNHS) contribute to the CTP site.

Belongs to the IspD/TarI cytidylyltransferase family. TarI subfamily.

It carries out the reaction D-ribitol 5-phosphate + CTP + H(+) = CDP-L-ribitol + diphosphate. It participates in cell wall biogenesis; poly(ribitol phosphate) teichoic acid biosynthesis. Functionally, catalyzes the transfer of the cytidylyl group of CTP to D-ribitol 5-phosphate. This is Ribitol-5-phosphate cytidylyltransferase from Staphylococcus epidermidis (strain ATCC 12228 / FDA PCI 1200).